The chain runs to 555 residues: CTP synthase (555 aa).

The tract at residues 1–271 (MVKRGKKTKY…DDKLAELFNI (271 aa)) is amidoligase domain. S19 provides a ligand contact to CTP. S19 lines the UTP pocket. ATP contacts are provided by residues 20–25 (SLGKGL) and D77. Mg(2+) contacts are provided by D77 and E145. CTP is bound by residues 152 to 154 (DIE), 192 to 197 (KTKPTQ), and K228. Residues 192 to 197 (KTKPTQ) and K228 each bind UTP. Residues 297 to 537 (RIGIVGKYVE…VKAALEHRDA (241 aa)) form the Glutamine amidotransferase type-1 domain. G358 contacts L-glutamine. Catalysis depends on C385, which acts as the Nucleophile; for glutamine hydrolysis. Residues 386–389 (LGLQ), E409, and R466 contribute to the L-glutamine site. Catalysis depends on residues H510 and E512. The segment at 536–555 (DAQQRQPSAEVKKLPVGKNG) is disordered.

This sequence belongs to the CTP synthase family. Homotetramer.

The enzyme catalyses UTP + L-glutamine + ATP + H2O = CTP + L-glutamate + ADP + phosphate + 2 H(+). It catalyses the reaction L-glutamine + H2O = L-glutamate + NH4(+). The catalysed reaction is UTP + NH4(+) + ATP = CTP + ADP + phosphate + 2 H(+). Its pathway is pyrimidine metabolism; CTP biosynthesis via de novo pathway; CTP from UDP: step 2/2. With respect to regulation, allosterically activated by GTP, when glutamine is the substrate; GTP has no effect on the reaction when ammonia is the substrate. The allosteric effector GTP functions by stabilizing the protein conformation that binds the tetrahedral intermediate(s) formed during glutamine hydrolysis. Inhibited by the product CTP, via allosteric rather than competitive inhibition. In terms of biological role, catalyzes the ATP-dependent amination of UTP to CTP with either L-glutamine or ammonia as the source of nitrogen. Regulates intracellular CTP levels through interactions with the four ribonucleotide triphosphates. The protein is CTP synthase of Anaeromyxobacter dehalogenans (strain 2CP-C).